A 318-amino-acid polypeptide reads, in one-letter code: Methionyl-tRNA formyltransferase (318 aa).

A (6S)-5,6,7,8-tetrahydrofolate-binding site is contributed by serine 112 to proline 115.

This sequence belongs to the Fmt family.

It carries out the reaction L-methionyl-tRNA(fMet) + (6R)-10-formyltetrahydrofolate = N-formyl-L-methionyl-tRNA(fMet) + (6S)-5,6,7,8-tetrahydrofolate + H(+). In terms of biological role, attaches a formyl group to the free amino group of methionyl-tRNA(fMet). The formyl group appears to play a dual role in the initiator identity of N-formylmethionyl-tRNA by promoting its recognition by IF2 and preventing the misappropriation of this tRNA by the elongation apparatus. The sequence is that of Methionyl-tRNA formyltransferase from Shewanella frigidimarina (strain NCIMB 400).